A 363-amino-acid chain; its full sequence is Spermidine/putrescine import ATP-binding protein PotA (363 aa).

The ABC transporter domain maps to 5–236; that stretch reads IKLKHVRKEY…PVNDFVARFI (232 aa). 38 to 45 contributes to the ATP binding site; the sequence is GPSGSGKT.

The protein belongs to the ABC transporter superfamily. Spermidine/putrescine importer (TC 3.A.1.11.1) family. As to quaternary structure, the complex is composed of two ATP-binding proteins (PotA), two transmembrane proteins (PotB and PotC) and a solute-binding protein (PotD).

It localises to the cell membrane. It carries out the reaction ATP + H2O + polyamine-[polyamine-binding protein]Side 1 = ADP + phosphate + polyamineSide 2 + [polyamine-binding protein]Side 1.. In terms of biological role, part of the ABC transporter complex PotABCD involved in spermidine/putrescine import. Responsible for energy coupling to the transport system. The chain is Spermidine/putrescine import ATP-binding protein PotA from Lactobacillus johnsonii (strain CNCM I-12250 / La1 / NCC 533).